The chain runs to 108 residues: Peptidyl-prolyl cis-trans isomerase FKBP1B (108 aa).

A PPIase FKBP-type domain is found at 20-108 (GQTCVVHYTG…IFDVELLNLE (89 aa)).

As to quaternary structure, identified in a complex composed of RYR2, FKBP1B, PKA catalytic subunit, PRKAR2A, AKAP6, and the protein phosphatases PP2A and PP1. Interacts directly with RYR2.

The protein resides in the cytoplasm. Its subcellular location is the sarcoplasmic reticulum. It carries out the reaction [protein]-peptidylproline (omega=180) = [protein]-peptidylproline (omega=0). With respect to regulation, inhibited by both FK506 and rapamycin. Functionally, has the potential to contribute to the immunosuppressive and toxic effects of FK506 and rapamycin. PPIases accelerate the folding of proteins. It catalyzes the cis-trans isomerization of proline imidic peptide bonds in oligopeptides. This Bos taurus (Bovine) protein is Peptidyl-prolyl cis-trans isomerase FKBP1B (FKBP1B).